The sequence spans 230 residues: Protein GrpE (230 aa).

Disordered regions lie at residues 1–28 (MADE…EALK) and 209–230 (GVSK…EDNA). The segment covering 221-230 (NGASTSEDNA) has biased composition (polar residues).

Belongs to the GrpE family. In terms of assembly, homodimer.

The protein resides in the cytoplasm. Participates actively in the response to hyperosmotic and heat shock by preventing the aggregation of stress-denatured proteins, in association with DnaK and GrpE. It is the nucleotide exchange factor for DnaK and may function as a thermosensor. Unfolded proteins bind initially to DnaJ; upon interaction with the DnaJ-bound protein, DnaK hydrolyzes its bound ATP, resulting in the formation of a stable complex. GrpE releases ADP from DnaK; ATP binding to DnaK triggers the release of the substrate protein, thus completing the reaction cycle. Several rounds of ATP-dependent interactions between DnaJ, DnaK and GrpE are required for fully efficient folding. This Brucella ovis (strain ATCC 25840 / 63/290 / NCTC 10512) protein is Protein GrpE.